A 181-amino-acid polypeptide reads, in one-letter code: Oligoribonuclease (181 aa).

Residues 8 to 171 enclose the Exonuclease domain; the sequence is LIWIDLEMTG…DDIRESVAEL (164 aa). Tyr-129 is an active-site residue.

The protein belongs to the oligoribonuclease family.

It is found in the cytoplasm. 3'-to-5' exoribonuclease specific for small oligoribonucleotides. The protein is Oligoribonuclease of Sodalis glossinidius (strain morsitans).